The sequence spans 173 residues: Superoxide dismutase [Cu-Zn] (173 aa).

A signal peptide spans 1–19 (MKSLFIASTMVLMAFPAFA). 3 residues coordinate Cu cation: His-67, His-69, and His-92. A disulfide bridge connects residues Cys-74 and Cys-169. Zn(2+) is bound by residues His-92, His-101, His-109, and Asp-112. His-147 lines the Cu cation pocket.

The protein belongs to the Cu-Zn superoxide dismutase family. As to quaternary structure, homodimer. It depends on Cu cation as a cofactor. Zn(2+) serves as cofactor.

The protein localises to the periplasm. It catalyses the reaction 2 superoxide + 2 H(+) = H2O2 + O2. In terms of biological role, destroys radicals which are normally produced within the cells and which are toxic to biological systems. The protein is Superoxide dismutase [Cu-Zn] (sodC) of Brucella abortus biovar 1 (strain 9-941).